The following is a 408-amino-acid chain: GTPase Obg (408 aa).

Positions 1–159 (MKFFDEARIE…RNLHLELKVL (159 aa)) constitute an Obg domain. An OBG-type G domain is found at 160–334 (ADVGLLGMPN…LIFALQDFLD (175 aa)). GTP is bound by residues 166 to 173 (GMPNAGKS), 191 to 195 (FTTLQ), 213 to 216 (DIPG), 284 to 287 (NKLD), and 315 to 317 (SAL). Mg(2+) is bound by residues Ser-173 and Thr-193. Residues 385-408 (AEDALAEDALDDDADGEDADPNAR) form a disordered region.

It belongs to the TRAFAC class OBG-HflX-like GTPase superfamily. OBG GTPase family. In terms of assembly, monomer. Mg(2+) serves as cofactor.

Its subcellular location is the cytoplasm. An essential GTPase which binds GTP, GDP and possibly (p)ppGpp with moderate affinity, with high nucleotide exchange rates and a fairly low GTP hydrolysis rate. Plays a role in control of the cell cycle, stress response, ribosome biogenesis and in those bacteria that undergo differentiation, in morphogenesis control. The chain is GTPase Obg from Azoarcus sp. (strain BH72).